Reading from the N-terminus, the 457-residue chain is tRNA modification GTPase MnmE (457 aa).

The (6S)-5-formyl-5,6,7,8-tetrahydrofolate site is built by R22, E86, and R125. A TrmE-type G domain is found at 221–381 (GLRAVLAGRP…LEAEVARVAG (161 aa)). N231 provides a ligand contact to K(+). GTP is bound by residues 231 to 236 (NVGKSS), 250 to 256 (TPIPGTT), and 275 to 278 (DTAG). S235 contributes to the Mg(2+) binding site. The K(+) site is built by T250, I252, and T255. Residue T256 participates in Mg(2+) binding. Residue K457 coordinates (6S)-5-formyl-5,6,7,8-tetrahydrofolate.

This sequence belongs to the TRAFAC class TrmE-Era-EngA-EngB-Septin-like GTPase superfamily. TrmE GTPase family. Homodimer. Heterotetramer of two MnmE and two MnmG subunits. K(+) serves as cofactor.

Its subcellular location is the cytoplasm. Functionally, exhibits a very high intrinsic GTPase hydrolysis rate. Involved in the addition of a carboxymethylaminomethyl (cmnm) group at the wobble position (U34) of certain tRNAs, forming tRNA-cmnm(5)s(2)U34. The chain is tRNA modification GTPase MnmE from Symbiobacterium thermophilum (strain DSM 24528 / JCM 14929 / IAM 14863 / T).